The chain runs to 313 residues: Porphobilinogen deaminase (313 aa).

Cysteine 241 is modified (S-(dipyrrolylmethanemethyl)cysteine).

The protein belongs to the HMBS family. In terms of assembly, monomer. Requires dipyrromethane as cofactor.

It catalyses the reaction 4 porphobilinogen + H2O = hydroxymethylbilane + 4 NH4(+). Its pathway is porphyrin-containing compound metabolism; protoporphyrin-IX biosynthesis; coproporphyrinogen-III from 5-aminolevulinate: step 2/4. The protein operates within porphyrin-containing compound metabolism; chlorophyll biosynthesis. Its function is as follows. Tetrapolymerization of the monopyrrole PBG into the hydroxymethylbilane pre-uroporphyrinogen in several discrete steps. In Chlorobium chlorochromatii (strain CaD3), this protein is Porphobilinogen deaminase.